The following is a 204-amino-acid chain: ATP phosphoribosyltransferase (204 aa).

The protein belongs to the ATP phosphoribosyltransferase family. Short subfamily. In terms of assembly, heteromultimer composed of HisG and HisZ subunits.

It is found in the cytoplasm. It catalyses the reaction 1-(5-phospho-beta-D-ribosyl)-ATP + diphosphate = 5-phospho-alpha-D-ribose 1-diphosphate + ATP. It functions in the pathway amino-acid biosynthesis; L-histidine biosynthesis; L-histidine from 5-phospho-alpha-D-ribose 1-diphosphate: step 1/9. Its function is as follows. Catalyzes the condensation of ATP and 5-phosphoribose 1-diphosphate to form N'-(5'-phosphoribosyl)-ATP (PR-ATP). Has a crucial role in the pathway because the rate of histidine biosynthesis seems to be controlled primarily by regulation of HisG enzymatic activity. The chain is ATP phosphoribosyltransferase from Leptospira biflexa serovar Patoc (strain Patoc 1 / Ames).